Reading from the N-terminus, the 504-residue chain is Probable cytochrome P450 513F1 (504 aa).

The helical transmembrane segment at 1-21 (MILSLLFLFVITLYFLIPSRI) threads the bilayer. Residue C449 participates in heme binding.

The protein belongs to the cytochrome P450 family. The cofactor is heme.

Its subcellular location is the membrane. This is Probable cytochrome P450 513F1 (cyp513F1) from Dictyostelium discoideum (Social amoeba).